Consider the following 340-residue polypeptide: MAVNIYYDKDCDLSLIQSKKVAIVGFGSQGHAHAENLRDSGVKVVIGLAKGGKSWAKAEAKGFDVKIVSEATKDADVVMILTPDELQSEIYKKEIEPNLKDGAAIAFGHGFNVHFGQIKAPKNIDVIMIAPKAPGHTVRSEFVRGGGIPDLIAVEQDASGQAKQIALSYASAIGGGRTGIIETTFKDETETDLFGEQAVLCGGLCALVNAGFETLVEAGYEPEMAYFECLHELKLIVDLMYQGGMADMRYSISNTAEYGDYVSGGRVVGEESKRAMKEVLKEIQNGKFAKDFILERKAGYVRMNAERSIAERSLLNQTGKKLRAMMPWISAGKLVDQNKN.

The KARI N-terminal Rossmann domain maps to 3–183 (VNIYYDKDCD…GGGRTGIIET (181 aa)). NADP(+) contacts are provided by residues 26–29 (FGSQ), Ser-54, and 84–87 (DELQ). Residue His-109 is part of the active site. Gly-135 contacts NADP(+). The KARI C-terminal knotted domain occupies 184 to 329 (TFKDETETDL…KKLRAMMPWI (146 aa)). Mg(2+)-binding residues include Asp-192, Glu-196, Glu-228, and Glu-232. Ser-253 provides a ligand contact to substrate.

It belongs to the ketol-acid reductoisomerase family. It depends on Mg(2+) as a cofactor.

The catalysed reaction is (2R)-2,3-dihydroxy-3-methylbutanoate + NADP(+) = (2S)-2-acetolactate + NADPH + H(+). It catalyses the reaction (2R,3R)-2,3-dihydroxy-3-methylpentanoate + NADP(+) = (S)-2-ethyl-2-hydroxy-3-oxobutanoate + NADPH + H(+). Its pathway is amino-acid biosynthesis; L-isoleucine biosynthesis; L-isoleucine from 2-oxobutanoate: step 2/4. It functions in the pathway amino-acid biosynthesis; L-valine biosynthesis; L-valine from pyruvate: step 2/4. Functionally, involved in the biosynthesis of branched-chain amino acids (BCAA). Catalyzes an alkyl-migration followed by a ketol-acid reduction of (S)-2-acetolactate (S2AL) to yield (R)-2,3-dihydroxy-isovalerate. In the isomerase reaction, S2AL is rearranged via a Mg-dependent methyl migration to produce 3-hydroxy-3-methyl-2-ketobutyrate (HMKB). In the reductase reaction, this 2-ketoacid undergoes a metal-dependent reduction by NADPH to yield (R)-2,3-dihydroxy-isovalerate. This Campylobacter curvus (strain 525.92) protein is Ketol-acid reductoisomerase (NADP(+)).